The sequence spans 417 residues: Serine hydroxymethyltransferase 4 (417 aa).

(6S)-5,6,7,8-tetrahydrofolate is bound by residues Leu121 and 125–127 (GHL). Residue Lys230 is modified to N6-(pyridoxal phosphate)lysine. 355–357 (SPF) lines the (6S)-5,6,7,8-tetrahydrofolate pocket.

This sequence belongs to the SHMT family. In terms of assembly, homodimer. Pyridoxal 5'-phosphate is required as a cofactor.

It localises to the cytoplasm. It catalyses the reaction (6R)-5,10-methylene-5,6,7,8-tetrahydrofolate + glycine + H2O = (6S)-5,6,7,8-tetrahydrofolate + L-serine. It participates in one-carbon metabolism; tetrahydrofolate interconversion. Its pathway is amino-acid biosynthesis; glycine biosynthesis; glycine from L-serine: step 1/1. In terms of biological role, catalyzes the reversible interconversion of serine and glycine with tetrahydrofolate (THF) serving as the one-carbon carrier. This reaction serves as the major source of one-carbon groups required for the biosynthesis of purines, thymidylate, methionine, and other important biomolecules. Also exhibits THF-independent aldolase activity toward beta-hydroxyamino acids, producing glycine and aldehydes, via a retro-aldol mechanism. The sequence is that of Serine hydroxymethyltransferase 4 from Colwellia psychrerythraea (strain 34H / ATCC BAA-681) (Vibrio psychroerythus).